The following is a 338-amino-acid chain: Ornithine carbamoyltransferase (338 aa).

Residues 56 to 59, Arg107, and 134 to 137 each bind carbamoyl phosphate; these read STRT and HPTQ. Residues Asn168, Asp232, and 236-237 contribute to the L-ornithine site; that span reads SM. Carbamoyl phosphate contacts are provided by residues 274 to 275 and Arg320; that span reads CL.

Belongs to the aspartate/ornithine carbamoyltransferase superfamily. OTCase family.

The protein resides in the cytoplasm. The catalysed reaction is carbamoyl phosphate + L-ornithine = L-citrulline + phosphate + H(+). It functions in the pathway amino-acid biosynthesis; L-arginine biosynthesis; L-arginine from L-ornithine and carbamoyl phosphate: step 1/3. Its function is as follows. Reversibly catalyzes the transfer of the carbamoyl group from carbamoyl phosphate (CP) to the N(epsilon) atom of ornithine (ORN) to produce L-citrulline. The chain is Ornithine carbamoyltransferase (argI) from Buchnera aphidicola subsp. Schizaphis graminum (strain Sg).